Here is a 120-residue protein sequence, read N- to C-terminus: Membrane-anchored ubiquitin-fold protein 4 (120 aa).

The 67-residue stretch at 7 to 73 (VELKFRLYDG…LENGKTVAQC (67 aa)) folds into the Ubiquitin-like domain. Cysteine 115 carries S-palmitoyl cysteine lipidation. Cysteine 117 carries the post-translational modification Cysteine methyl ester. The S-farnesyl cysteine moiety is linked to residue cysteine 117. Residues 118–120 (TIM) constitute a propeptide, removed in mature form.

As to expression, ubiquitous.

The protein localises to the cell membrane. May serve as docking site to facilitate the association of other proteins to the plasma membrane. This Arabidopsis thaliana (Mouse-ear cress) protein is Membrane-anchored ubiquitin-fold protein 4 (MUB4).